A 596-amino-acid chain; its full sequence is Aspartate--tRNA(Asp/Asn) ligase (596 aa).

E182 contacts L-aspartate. Positions 206–209 (QLFK) are aspartate. An L-aspartate-binding site is contributed by R228. ATP contacts are provided by residues 228–230 (RDE) and Q237. H456 serves as a coordination point for L-aspartate. Residue E490 participates in ATP binding. Residue R497 coordinates L-aspartate. 542–545 (GLDR) is a binding site for ATP.

This sequence belongs to the class-II aminoacyl-tRNA synthetase family. Type 1 subfamily. As to quaternary structure, homodimer.

The protein resides in the cytoplasm. It carries out the reaction tRNA(Asx) + L-aspartate + ATP = L-aspartyl-tRNA(Asx) + AMP + diphosphate. Functionally, aspartyl-tRNA synthetase with relaxed tRNA specificity since it is able to aspartylate not only its cognate tRNA(Asp) but also tRNA(Asn). Reaction proceeds in two steps: L-aspartate is first activated by ATP to form Asp-AMP and then transferred to the acceptor end of tRNA(Asp/Asn). The polypeptide is Aspartate--tRNA(Asp/Asn) ligase (Syntrophotalea carbinolica (strain DSM 2380 / NBRC 103641 / GraBd1) (Pelobacter carbinolicus)).